The following is a 463-amino-acid chain: Fumarate hydratase class II (463 aa).

Substrate-binding positions include 98 to 100, 129 to 132, 139 to 141, and threonine 187; these read SGT, HPND, and SSN. Histidine 188 (proton donor/acceptor) is an active-site residue. Residue serine 318 is part of the active site. Substrate is bound by residues serine 319 and 324–326; that span reads KVN.

It belongs to the class-II fumarase/aspartase family. Fumarase subfamily. In terms of assembly, homotetramer.

The protein localises to the cytoplasm. The enzyme catalyses (S)-malate = fumarate + H2O. Its pathway is carbohydrate metabolism; tricarboxylic acid cycle; (S)-malate from fumarate: step 1/1. In terms of biological role, involved in the TCA cycle. Catalyzes the stereospecific interconversion of fumarate to L-malate. In Brucella melitensis biotype 1 (strain ATCC 23456 / CCUG 17765 / NCTC 10094 / 16M), this protein is Fumarate hydratase class II.